We begin with the raw amino-acid sequence, 262 residues long: MLTLYGETFPSRLLLGTAAYPTPEILKQSIQTAQPAMITVSLRRAGSGGEAHGQGFWSLLQETGVPVLPNTAGCQSVQEAVTTAQMAREVFETDWIKLELIGDDDTLQPDVFQLVEAAEILIKDGFKVLPYCTEDLIACRRLLDAGCQALMPWAAPIGTGLGAVHAYALNVLRERLPDTPLIIDAGLGLPSQAAQVMEWGFDGVLLNTAVSRSGDPVNMARAFALAVESGRLAFEAGPVEARDKAQASTPTVGQPFWHSAEY.

The active-site Schiff-base intermediate with DXP is the Lys97. 1-deoxy-D-xylulose 5-phosphate contacts are provided by residues Gly158, 185–186, and 207–208; these read AG and NT. The tract at residues 243 to 262 is disordered; it reads DKAQASTPTVGQPFWHSAEY.

This sequence belongs to the ThiG family. Homotetramer. Forms heterodimers with either ThiH or ThiS.

It localises to the cytoplasm. It catalyses the reaction [ThiS sulfur-carrier protein]-C-terminal-Gly-aminoethanethioate + 2-iminoacetate + 1-deoxy-D-xylulose 5-phosphate = [ThiS sulfur-carrier protein]-C-terminal Gly-Gly + 2-[(2R,5Z)-2-carboxy-4-methylthiazol-5(2H)-ylidene]ethyl phosphate + 2 H2O + H(+). Its pathway is cofactor biosynthesis; thiamine diphosphate biosynthesis. Its function is as follows. Catalyzes the rearrangement of 1-deoxy-D-xylulose 5-phosphate (DXP) to produce the thiazole phosphate moiety of thiamine. Sulfur is provided by the thiocarboxylate moiety of the carrier protein ThiS. In vitro, sulfur can be provided by H(2)S. This is Thiazole synthase from Neisseria meningitidis serogroup B (strain ATCC BAA-335 / MC58).